The sequence spans 380 residues: 3-dehydroquinate synthase (380 aa).

NAD(+) contacts are provided by residues 100–104 (GAASD), 124–125 (TT), Lys-137, and Lys-146. Zn(2+) contacts are provided by Glu-179, His-251, and His-267. The interval 320–343 (YMQRDKKNMQSNDTDSDKDSREMP) is disordered.

The protein belongs to the sugar phosphate cyclases superfamily. Dehydroquinate synthase family. NAD(+) serves as cofactor. Requires Co(2+) as cofactor. It depends on Zn(2+) as a cofactor.

The protein localises to the cytoplasm. The enzyme catalyses 7-phospho-2-dehydro-3-deoxy-D-arabino-heptonate = 3-dehydroquinate + phosphate. The protein operates within metabolic intermediate biosynthesis; chorismate biosynthesis; chorismate from D-erythrose 4-phosphate and phosphoenolpyruvate: step 2/7. Catalyzes the conversion of 3-deoxy-D-arabino-heptulosonate 7-phosphate (DAHP) to dehydroquinate (DHQ). The protein is 3-dehydroquinate synthase of Tropheryma whipplei (strain Twist) (Whipple's bacillus).